The following is a 212-amino-acid chain: Thymidylate kinase (212 aa).

Residue 11 to 18 participates in ATP binding; sequence GPEGAGKT.

This sequence belongs to the thymidylate kinase family.

The catalysed reaction is dTMP + ATP = dTDP + ADP. Phosphorylation of dTMP to form dTDP in both de novo and salvage pathways of dTTP synthesis. The chain is Thymidylate kinase from Streptococcus pneumoniae serotype 19F (strain G54).